The primary structure comprises 388 residues: MNLHEYQAKQLFARYGLPAPVGYACTTPREAEEAASKIGAGPWVVKCQVHAGGRGKAGGVKVVKSKEEIRAFAENWLGKRLVTYQTDANGQPVNQILVEAATDIDKELYLGAVVDRSSRRVVFMASTEGGVEIEKVAEETPHLIHKVALDPLTGPMPYQGRELAFKLGLEGKLVQQFTKIFMGLATIFLERDLALIEINPLVITKQGDLICLDGKLGADGNALFRQPDLREMRDQSQEDPREAQAAQWELNYVALDGNIGCMVNGAGLAMGTMDIVKLHGGEPANFLDVGGGATKERVTEAFKIILSDDNVKAVLVNIFGGIVRCDLIADGIIGAVEEVGVNVPVVVRLEGNNAELGAKKLADSGLNIIAAKSLTDAAQQVVAAVEGK.

The ATP-grasp domain occupies 9–244; that stretch reads KQLFARYGLP…QSQEDPREAQ (236 aa). ATP-binding positions include lysine 46, 53-55, glutamate 99, threonine 102, and glutamate 107; that span reads GRG. Asparagine 199 and aspartate 213 together coordinate Mg(2+). Residues asparagine 264 and 321–323 contribute to the substrate site; that span reads GIV.

This sequence belongs to the succinate/malate CoA ligase beta subunit family. Heterotetramer of two alpha and two beta subunits. Mg(2+) serves as cofactor.

It catalyses the reaction succinate + ATP + CoA = succinyl-CoA + ADP + phosphate. It carries out the reaction GTP + succinate + CoA = succinyl-CoA + GDP + phosphate. The protein operates within carbohydrate metabolism; tricarboxylic acid cycle; succinate from succinyl-CoA (ligase route): step 1/1. Its function is as follows. Succinyl-CoA synthetase functions in the citric acid cycle (TCA), coupling the hydrolysis of succinyl-CoA to the synthesis of either ATP or GTP and thus represents the only step of substrate-level phosphorylation in the TCA. The beta subunit provides nucleotide specificity of the enzyme and binds the substrate succinate, while the binding sites for coenzyme A and phosphate are found in the alpha subunit. This chain is Succinate--CoA ligase [ADP-forming] subunit beta, found in Salmonella dublin (strain CT_02021853).